The following is a 100-amino-acid chain: Urease subunit gamma (100 aa).

It belongs to the urease gamma subunit family. As to quaternary structure, heterotrimer of UreA (gamma), UreB (beta) and UreC (alpha) subunits. Three heterotrimers associate to form the active enzyme.

It localises to the cytoplasm. The enzyme catalyses urea + 2 H2O + H(+) = hydrogencarbonate + 2 NH4(+). Its pathway is nitrogen metabolism; urea degradation; CO(2) and NH(3) from urea (urease route): step 1/1. The protein is Urease subunit gamma of Leptothrix cholodnii (strain ATCC 51168 / LMG 8142 / SP-6) (Leptothrix discophora (strain SP-6)).